Consider the following 147-residue polypeptide: Ubiquitin-conjugating enzyme E2 4 (147 aa).

Residues 1–147 form the UBC core domain; sequence MALKRINREL…AREWTRKYAI (147 aa). Residue C85 is the Glycyl thioester intermediate of the active site.

Belongs to the ubiquitin-conjugating enzyme family. As to quaternary structure, interacts with the E1 ubiquitin-activating enzyme ptr3 and E3 ubiquitin-protein ligase pub2.

It catalyses the reaction S-ubiquitinyl-[E1 ubiquitin-activating enzyme]-L-cysteine + [E2 ubiquitin-conjugating enzyme]-L-cysteine = [E1 ubiquitin-activating enzyme]-L-cysteine + S-ubiquitinyl-[E2 ubiquitin-conjugating enzyme]-L-cysteine.. It functions in the pathway protein modification; protein ubiquitination. In terms of biological role, E2 ubiquitin-conjugating enzyme that catalyzes the covalent attachment of ubiquitin to other proteins. Mediates the selective degradation of short-lived and abnormal proteins. Mediates ubiquitination of pex5. The sequence is that of Ubiquitin-conjugating enzyme E2 4 (ubc4) from Schizosaccharomyces pombe (strain 972 / ATCC 24843) (Fission yeast).